The chain runs to 280 residues: Trypsin zeta (280 aa).

The first 22 residues, 1-22 (MSSSWIVGLLAFLVSLVALTQG), serve as a signal peptide directing secretion. Positions 23 to 38 (LPLLEDLDEKSVPDGR) are cleaved as a propeptide — activation peptide. Residues 39 to 278 (IVGGYATDIA…LRPWIDAVLA (240 aa)) form the Peptidase S1 domain. The cysteines at positions 72 and 88 are disulfide-linked. Active-site charge relay system residues include His87 and Asp134. Intrachain disulfides connect Cys198–Cys218 and Cys230–Cys254. The Charge relay system role is filled by Ser234.

The protein belongs to the peptidase S1 family.

It is found in the secreted. Its subcellular location is the extracellular space. It catalyses the reaction Preferential cleavage: Arg-|-Xaa, Lys-|-Xaa.. The polypeptide is Trypsin zeta (zetaTry) (Drosophila melanogaster (Fruit fly)).